The primary structure comprises 1191 residues: DNA-directed RNA polymerase subunit beta (1191 aa).

The interval 1164–1191 (EEEDLQPADALNIAPQPDTEEEPVESFE) is disordered. The segment covering 1181–1191 (DTEEEPVESFE) has biased composition (acidic residues).

The protein belongs to the RNA polymerase beta chain family. The RNAP catalytic core consists of 2 alpha, 1 beta, 1 beta' and 1 omega subunit. When a sigma factor is associated with the core the holoenzyme is formed, which can initiate transcription.

It carries out the reaction RNA(n) + a ribonucleoside 5'-triphosphate = RNA(n+1) + diphosphate. In terms of biological role, DNA-dependent RNA polymerase catalyzes the transcription of DNA into RNA using the four ribonucleoside triphosphates as substrates. This chain is DNA-directed RNA polymerase subunit beta, found in Lysinibacillus sphaericus (strain C3-41).